A 576-amino-acid polypeptide reads, in one-letter code: Arginine--tRNA ligase (576 aa).

A 'HIGH' region motif is present at residues alanine 126–histidine 136.

The protein belongs to the class-I aminoacyl-tRNA synthetase family. As to quaternary structure, monomer.

Its subcellular location is the cytoplasm. The enzyme catalyses tRNA(Arg) + L-arginine + ATP = L-arginyl-tRNA(Arg) + AMP + diphosphate. In Rickettsia rickettsii (strain Iowa), this protein is Arginine--tRNA ligase.